The following is an 875-amino-acid chain: Alanine--tRNA ligase (875 aa).

Zn(2+)-binding residues include histidine 564, histidine 568, cysteine 666, and histidine 670.

It belongs to the class-II aminoacyl-tRNA synthetase family. As to quaternary structure, homotetramer. Requires Zn(2+) as cofactor.

It localises to the cytoplasm. It catalyses the reaction tRNA(Ala) + L-alanine + ATP = L-alanyl-tRNA(Ala) + AMP + diphosphate. Functionally, catalyzes the attachment of alanine to tRNA(Ala) in a two-step reaction: alanine is first activated by ATP to form Ala-AMP and then transferred to the acceptor end of tRNA(Ala). Also edits incorrectly charged Ser-tRNA(Ala) and Gly-tRNA(Ala) via its editing domain. This chain is Alanine--tRNA ligase, found in Enterobacter sp. (strain 638).